The chain runs to 90 residues: Probable Fe(2+)-trafficking protein (90 aa).

Belongs to the Fe(2+)-trafficking protein family.

Its function is as follows. Could be a mediator in iron transactions between iron acquisition and iron-requiring processes, such as synthesis and/or repair of Fe-S clusters in biosynthetic enzymes. The chain is Probable Fe(2+)-trafficking protein from Nitrosospira multiformis (strain ATCC 25196 / NCIMB 11849 / C 71).